Reading from the N-terminus, the 444-residue chain is tRNA-2-methylthio-N(6)-dimethylallyladenosine synthase (444 aa).

The 115-residue stretch at 3–117 (RGLYIESYGC…LPELIMKVKR (115 aa)) folds into the MTTase N-terminal domain. Cys-12, Cys-48, Cys-80, Cys-155, Cys-159, and Cys-162 together coordinate [4Fe-4S] cluster. One can recognise a Radical SAM core domain in the interval 141–374 (ANGGVSAYVS…LLTKQQLQFN (234 aa)). Positions 375-441 (KSMEGRVMDV…QNSLEGTVLS (67 aa)) constitute a TRAM domain.

The protein belongs to the methylthiotransferase family. MiaB subfamily. Monomer. [4Fe-4S] cluster serves as cofactor.

It localises to the cytoplasm. It catalyses the reaction N(6)-dimethylallyladenosine(37) in tRNA + (sulfur carrier)-SH + AH2 + 2 S-adenosyl-L-methionine = 2-methylsulfanyl-N(6)-dimethylallyladenosine(37) in tRNA + (sulfur carrier)-H + 5'-deoxyadenosine + L-methionine + A + S-adenosyl-L-homocysteine + 2 H(+). In terms of biological role, catalyzes the methylthiolation of N6-(dimethylallyl)adenosine (i(6)A), leading to the formation of 2-methylthio-N6-(dimethylallyl)adenosine (ms(2)i(6)A) at position 37 in tRNAs that read codons beginning with uridine. The sequence is that of tRNA-2-methylthio-N(6)-dimethylallyladenosine synthase from Anaplasma phagocytophilum (strain HZ).